The following is a 492-amino-acid chain: N-succinylglutamate 5-semialdehyde dehydrogenase (492 aa).

220–225 (GRANTG) lines the NAD(+) pocket. Active-site residues include Glu-243 and Cys-277.

It belongs to the aldehyde dehydrogenase family. AstD subfamily.

It carries out the reaction N-succinyl-L-glutamate 5-semialdehyde + NAD(+) + H2O = N-succinyl-L-glutamate + NADH + 2 H(+). Its pathway is amino-acid degradation; L-arginine degradation via AST pathway; L-glutamate and succinate from L-arginine: step 4/5. Its function is as follows. Catalyzes the NAD-dependent reduction of succinylglutamate semialdehyde into succinylglutamate. This chain is N-succinylglutamate 5-semialdehyde dehydrogenase, found in Shigella boydii serotype 4 (strain Sb227).